The following is a 256-amino-acid chain: Triosephosphate isomerase (256 aa).

Substrate is bound at residue 10–12; sequence NWK. The active-site Electrophile is the His96. Glu168 functions as the Proton acceptor in the catalytic mechanism. Residues Gly174 and Ser213 each coordinate substrate.

This sequence belongs to the triosephosphate isomerase family. In terms of assembly, homodimer.

It localises to the cytoplasm. It carries out the reaction D-glyceraldehyde 3-phosphate = dihydroxyacetone phosphate. Its pathway is carbohydrate biosynthesis; gluconeogenesis. It participates in carbohydrate degradation; glycolysis; D-glyceraldehyde 3-phosphate from glycerone phosphate: step 1/1. In terms of biological role, involved in the gluconeogenesis. Catalyzes stereospecifically the conversion of dihydroxyacetone phosphate (DHAP) to D-glyceraldehyde-3-phosphate (G3P). In Wigglesworthia glossinidia brevipalpis, this protein is Triosephosphate isomerase.